Here is a 117-residue protein sequence, read N- to C-terminus: uncharacterized protein (117 aa).

The helical transmembrane segment at 4-26 (VLNFHFSYIYTYFITITTNYKYG) threads the bilayer.

The protein resides in the host membrane. This is an uncharacterized protein from Sulfolobus islandicus rod-shaped virus 1 (SIRV-1).